Here is a 285-residue protein sequence, read N- to C-terminus: Ribonuclease Z (285 aa).

Zn(2+) contacts are provided by histidine 61, histidine 63, aspartate 65, histidine 66, histidine 152, aspartate 175, and histidine 239. Residue aspartate 65 is the Proton acceptor of the active site.

This sequence belongs to the RNase Z family. In terms of assembly, homodimer. The cofactor is Zn(2+).

The catalysed reaction is Endonucleolytic cleavage of RNA, removing extra 3' nucleotides from tRNA precursor, generating 3' termini of tRNAs. A 3'-hydroxy group is left at the tRNA terminus and a 5'-phosphoryl group is left at the trailer molecule.. Its function is as follows. Zinc phosphodiesterase, which displays some tRNA 3'-processing endonuclease activity. Probably involved in tRNA maturation, by removing a 3'-trailer from precursor tRNA. This Mycobacterium sp. (strain JLS) protein is Ribonuclease Z.